The sequence spans 82 residues: Large ribosomal subunit protein uL23 (82 aa).

It belongs to the universal ribosomal protein uL23 family. As to quaternary structure, part of the 50S ribosomal subunit. Contacts protein L29.

Its function is as follows. Binds to 23S rRNA. One of the proteins that surrounds the polypeptide exit tunnel on the outside of the ribosome. This is Large ribosomal subunit protein uL23 from Sulfurisphaera tokodaii (strain DSM 16993 / JCM 10545 / NBRC 100140 / 7) (Sulfolobus tokodaii).